The following is a 132-amino-acid chain: MEALGADVTQGLEKGSLITCADNTGARELKVISVHGYSGTKNRHPKAGLGDKITVSVTKGTPEMRRQVLEAVVVRQRKPIRRPDGTRVKFEDNAAVIVDENEDPRGTELKGPIAREVAQRFGSVASAATMIV.

The protein belongs to the universal ribosomal protein uL14 family. In terms of assembly, the L3/L14/L24e cluster may contact the 16S rRNA in 2 intersubunit bridges. Part of the 50S ribosomal subunit. Forms a cluster with proteins L3 and L24e.

Functionally, forms part of two intersubunit bridges in the 70S ribosome. Binds to 23S rRNA. The sequence is that of Large ribosomal subunit protein uL14 from Haloarcula marismortui (strain ATCC 43049 / DSM 3752 / JCM 8966 / VKM B-1809) (Halobacterium marismortui).